Reading from the N-terminus, the 282-residue chain is MADNVTPLASLSLTHVYYNPDDPISLLCAWLALVPQALCVVYATLIWSTREAEVILMFAGQLACEAANFALKRLIKEERPARIHSTGGKGYGMPSSHAQFVSFWAVALGLFLLARHTPREQQQQQQQKQKQRERKKQVTNVKTTTTNGSGNGSLFKTLTDSATDLERYAHEPWSFAHRFVASLGALVLAGAVAWSRTYLGYHTEKQVLVGCGAGTLCAVAWFVVTHVVRQSGLLGQILDFPVVRWFRVRDLVVEEDLPQAGWEKWEEQRVARREVEERKKAL.

Transmembrane regions (helical) follow at residues 26-46 (LLCA…ATLI) and 93-113 (MPSS…LFLL). Residues 121 to 153 (QQQQQQQKQKQRERKKQVTNVKTTTTNGSGNGS) are disordered. Positions 138-148 (VTNVKTTTTNG) are enriched in low complexity. Transmembrane regions (helical) follow at residues 173–193 (WSFA…GAVA) and 207–227 (VLVG…VTHV).

Belongs to the dolichyldiphosphatase family.

It is found in the endoplasmic reticulum membrane. The catalysed reaction is a di-trans,poly-cis-dolichyl diphosphate + H2O = a di-trans,poly-cis-dolichyl phosphate + phosphate + H(+). The protein operates within protein modification; protein glycosylation. This Neurospora crassa (strain ATCC 24698 / 74-OR23-1A / CBS 708.71 / DSM 1257 / FGSC 987) protein is Putative dolichyldiphosphatase.